The chain runs to 126 residues: Acidic phospholipase A2 2 (126 aa).

The propeptide occupies 1–7 (SNRPMPL). Disulfide bonds link Cys18-Cys78, Cys33-Cys125, Cys35-Cys51, Cys50-Cys106, Cys57-Cys99, Cys67-Cys92, and Cys85-Cys97. Positions 34, 36, and 38 each coordinate Ca(2+). The active site involves His54. Ca(2+) is bound at residue Asp55. Asp100 is an active-site residue.

This sequence belongs to the phospholipase A2 family. Group I subfamily. D49 sub-subfamily. In terms of assembly, heterodimer formed between two homologous isoforms: isoform 1 and isoform 2. Ca(2+) is required as a cofactor. Expressed by the venom gland.

Its subcellular location is the secreted. The catalysed reaction is a 1,2-diacyl-sn-glycero-3-phosphocholine + H2O = a 1-acyl-sn-glycero-3-phosphocholine + a fatty acid + H(+). In terms of biological role, PLA2 catalyzes the calcium-dependent hydrolysis of the 2-acyl groups in 3-sn-phosphoglycerides. In Naja sagittifera (Andaman cobra), this protein is Acidic phospholipase A2 2.